The sequence spans 475 residues: Aspartate ammonia-lyase (475 aa).

Positions 104, 143, 144, 145, 190, and 191 each coordinate L-aspartate. Residues 320–329 (GSSIMPGKVN) form an SS loop region. Catalysis depends on Ser-321, which acts as the Proton acceptor. L-aspartate is bound by residues Ser-322 and Lys-327.

It belongs to the class-II fumarase/aspartase family. Aspartase subfamily. As to quaternary structure, homotetramer.

The enzyme catalyses L-aspartate = fumarate + NH4(+). Functionally, catalyzes the reversible conversion of L-aspartate to fumarate and ammonia. This chain is Aspartate ammonia-lyase, found in Bacillus subtilis (strain 168).